The following is a 227-amino-acid chain: Glutathione S-transferase U18 (227 aa).

Residues 4 to 83 form the GST N-terminal domain; that stretch reads EDVKLIGSWA…YIDEAWNSSG (80 aa). Residues 14-15, 40-41, 54-55, and 67-68 each bind glutathione; these read SV, SK, KM, and ES. The GST C-terminal domain occupies 90 to 221; the sequence is HPYDRAIARF…TKLAEFARKL (132 aa).

Belongs to the GST superfamily. Tau family.

The protein resides in the cytoplasm. It is found in the cytosol. It carries out the reaction RX + glutathione = an S-substituted glutathione + a halide anion + H(+). Functionally, may be involved in the conjugation of reduced glutathione to a wide number of exogenous and endogenous hydrophobic electrophiles and have a detoxification role against certain herbicides. The chain is Glutathione S-transferase U18 (GSTU18) from Arabidopsis thaliana (Mouse-ear cress).